The following is a 360-amino-acid chain: Putative F-box protein At3g47150 (360 aa).

An F-box domain is found at 6–56 (NTTQIYIPLDLQINILLRLPVKSLLRFRCVSKLWCSIITSHDFRNRHFNIT).

In Arabidopsis thaliana (Mouse-ear cress), this protein is Putative F-box protein At3g47150.